The sequence spans 327 residues: Ribosomal RNA small subunit methyltransferase H (327 aa).

Residues 36–38, Asp-55, Leu-89, Asp-103, and Gln-110 contribute to the S-adenosyl-L-methionine site; that span reads GGH. Positions 286–327 are disordered; it reads GAEPASDTEIEQNARAGSVRLRAAERTAAEPGRAHNPTGGVR.

The protein belongs to the methyltransferase superfamily. RsmH family.

Its subcellular location is the cytoplasm. The enzyme catalyses cytidine(1402) in 16S rRNA + S-adenosyl-L-methionine = N(4)-methylcytidine(1402) in 16S rRNA + S-adenosyl-L-homocysteine + H(+). Functionally, specifically methylates the N4 position of cytidine in position 1402 (C1402) of 16S rRNA. The chain is Ribosomal RNA small subunit methyltransferase H from Parafrankia sp. (strain EAN1pec).